A 503-amino-acid polypeptide reads, in one-letter code: Aspartyl/glutamyl-tRNA(Asn/Gln) amidotransferase subunit B (503 aa).

This sequence belongs to the GatB/GatE family. GatB subfamily. As to quaternary structure, heterotrimer of A, B and C subunits.

The catalysed reaction is L-glutamyl-tRNA(Gln) + L-glutamine + ATP + H2O = L-glutaminyl-tRNA(Gln) + L-glutamate + ADP + phosphate + H(+). It carries out the reaction L-aspartyl-tRNA(Asn) + L-glutamine + ATP + H2O = L-asparaginyl-tRNA(Asn) + L-glutamate + ADP + phosphate + 2 H(+). Functionally, allows the formation of correctly charged Asn-tRNA(Asn) or Gln-tRNA(Gln) through the transamidation of misacylated Asp-tRNA(Asn) or Glu-tRNA(Gln) in organisms which lack either or both of asparaginyl-tRNA or glutaminyl-tRNA synthetases. The reaction takes place in the presence of glutamine and ATP through an activated phospho-Asp-tRNA(Asn) or phospho-Glu-tRNA(Gln). The polypeptide is Aspartyl/glutamyl-tRNA(Asn/Gln) amidotransferase subunit B (Rhodococcus erythropolis (strain PR4 / NBRC 100887)).